The chain runs to 441 residues: Synaptotagmin-1 (441 aa).

At 1-69 (MVKLDFSSQD…DVVKEKVMQQ (69 aa)) the chain is on the vesicular side. The chain crosses the membrane as a helical span at residues 70-96 (TGMPEWAFVFLGFVFILLVLACAFCLI). The Cytoplasmic segment spans residues 97–441 (RKLFGKKRHG…EEGDKKDDKK (345 aa)). 2 consecutive C2 domains span residues 159-278 (KLGR…EEWK) and 292-425 (SLGD…AQWH). Residues aspartate 190, aspartate 196, aspartate 248, phenylalanine 249, aspartate 250, serine 253, lysine 254, aspartate 256, aspartate 323, aspartate 329, aspartate 383, aspartate 385, and aspartate 391 each coordinate Ca(2+).

Belongs to the synaptotagmin family. Ca(2+) is required as a cofactor. In terms of tissue distribution, localized to regions known to be rich in synapses and appears to be associated with synaptic vesicles. Also found in some non-neuronal secretory structures.

It is found in the cytoplasmic vesicle. The protein localises to the secretory vesicle. Its subcellular location is the synaptic vesicle membrane. It localises to the synapse. Its function is as follows. May have a regulatory role in the membrane interactions during trafficking of synaptic vesicles at the active zone of the synapse. It binds acidic phospholipids with a specificity that requires the presence of both an acidic head group and a diacyl backbone. Involved in necrotic cell death. This chain is Synaptotagmin-1 (snt-1), found in Caenorhabditis elegans.